Here is a 564-residue protein sequence, read N- to C-terminus: Probable lysosomal cobalamin transporter (564 aa).

9 consecutive transmembrane segments (helical) span residues 8 to 28 (LIWSVYGVAIAILIAVASTFI), 41 to 61 (VTLICIISITVLLATVLLLPV), 94 to 114 (TIVYYSLYTVDALLCLIGIPF), 144 to 164 (YTLFFVAILIVLFLVGFFIPT), 188 to 208 (ALTFSVGILTTLGLSLYIIYT), 312 to 332 (LLAGFVLLLAALFLWTSLCVT), 375 to 395 (VIFTLIVLFLFCSSVVGIAAF), 418 to 438 (LLLTSMLMLITLALNYSVAVI), and 506 to 526 (FFGAVFFWAQFIFLGLYLLVL).

Belongs to the LIMR family. LMBRD1 subfamily.

The protein localises to the lysosome membrane. Functionally, probable lysosomal cobalamin transporter. Required to export cobalamin from lysosomes allowing its conversion to cofactors. The protein is Probable lysosomal cobalamin transporter of Aspergillus clavatus (strain ATCC 1007 / CBS 513.65 / DSM 816 / NCTC 3887 / NRRL 1 / QM 1276 / 107).